The primary structure comprises 171 residues: Dual specificity protein phosphatase OPG106 (171 aa).

The region spanning 23–171 (SPTIMTRVTN…IIEKYVIDKN (149 aa)) is the Tyrosine-protein phosphatase domain. The active-site Phosphocysteine intermediate is the cysteine 110.

It belongs to the protein-tyrosine phosphatase family. Non-receptor class dual specificity subfamily. Homodimer.

It localises to the virion. Its subcellular location is the host cytoplasm. It catalyses the reaction O-phospho-L-tyrosyl-[protein] + H2O = L-tyrosyl-[protein] + phosphate. The catalysed reaction is O-phospho-L-seryl-[protein] + H2O = L-seryl-[protein] + phosphate. Its function is as follows. Serine/tyrosine phosphatase which down-regulates cellular antiviral response by dephosphorylating activated host STAT1 and blocking interferon (IFN)-stimulated innate immune responses. Dephosphorylates the OPG144 protein. This is Dual specificity protein phosphatase OPG106 (OPG106) from Homo sapiens (Human).